The sequence spans 365 residues: Tubulin-like protein CetZ (365 aa).

GTP-binding positions include Q10–K14, G103–G105, E136, N163, and N181.

This sequence belongs to the CetZ family.

The protein localises to the cytoplasm. Involved in cell shape control. This Pyrococcus horikoshii (strain ATCC 700860 / DSM 12428 / JCM 9974 / NBRC 100139 / OT-3) protein is Tubulin-like protein CetZ.